The following is a 556-amino-acid chain: Oxygen-dependent choline dehydrogenase (556 aa).

Residue 4 to 33 (DYIIIGAGSAGNVLATRLTEDPNTTVLLLE) participates in FAD binding. The active-site Proton acceptor is H473.

The protein belongs to the GMC oxidoreductase family. It depends on FAD as a cofactor.

The catalysed reaction is choline + A = betaine aldehyde + AH2. It carries out the reaction betaine aldehyde + NAD(+) + H2O = glycine betaine + NADH + 2 H(+). It participates in amine and polyamine biosynthesis; betaine biosynthesis via choline pathway; betaine aldehyde from choline (cytochrome c reductase route): step 1/1. Involved in the biosynthesis of the osmoprotectant glycine betaine. Catalyzes the oxidation of choline to betaine aldehyde and betaine aldehyde to glycine betaine at the same rate. This chain is Oxygen-dependent choline dehydrogenase, found in Escherichia coli O17:K52:H18 (strain UMN026 / ExPEC).